The following is a 136-amino-acid chain: MAKAIPKKGSRGRIGSRKSIRKIPKGVIHIQASFNNTIVTVTDVRGRVVSWSSAGTCGFRGTRRGTPFAAQTAAANAIRAVVDQGMQRAEVMIKGPGLGRDAALRAIRRSGILLTFVRDVTPMPHNGCRPPKKRRV.

Belongs to the universal ribosomal protein uS11 family. In terms of assembly, part of the 30S ribosomal subunit.

Its subcellular location is the plastid. The protein localises to the chloroplast. This is Small ribosomal subunit protein uS11c from Guizotia abyssinica (Niger).